A 101-amino-acid chain; its full sequence is Small ribosomal subunit protein uS14 (101 aa).

The protein belongs to the universal ribosomal protein uS14 family. As to quaternary structure, part of the 30S ribosomal subunit. Contacts proteins S3 and S10.

Binds 16S rRNA, required for the assembly of 30S particles and may also be responsible for determining the conformation of the 16S rRNA at the A site. This Alteromonas mediterranea (strain DSM 17117 / CIP 110805 / LMG 28347 / Deep ecotype) protein is Small ribosomal subunit protein uS14.